Here is a 450-residue protein sequence, read N- to C-terminus: Vacuolar cation/proton exchanger 1c (450 aa).

Residues 1–73 (MAPPESSHHH…LLGGPAAQLQ (73 aa)) lie on the Cytoplasmic side of the membrane. The disordered stretch occupies residues 28–52 (AAEEEEKKEAAAWTPSSSSSMTGRK). Residues 74–94 (EVLLGTKLYPLFSAVPLAVAA) traverse the membrane as a helical segment. The Extracellular portion of the chain corresponds to 95–101 (ESLRLGR). Residues 102-122 (VWVFAFSLIGLAPLAERVSFL) form a helical membrane-spanning segment. Topologically, residues 123–134 (SEHIANTVGPTA) are cytoplasmic. A helical membrane pass occupies residues 135–155 (GGIMNATCGNVPELIIALFAL). A cation selection region spans residues 143–178 (GNVPELIIALFALHKNKMEILKWSLLGSILSNLLLV). Topologically, residues 156 to 170 (HKNKMEILKWSLLGS) are extracellular. A helical transmembrane segment spans residues 171 to 191 (ILSNLLLVLGSSLLFGGIVNI). The Cytoplasmic portion of the chain corresponds to 192–201 (GKERPLDKRQ). Residues 202-222 (ADVSIGLLLLGVLCHIATLVS) traverse the membrane as a helical segment. At 223-239 (KYTSSTGDSINSSSVMQ) the chain is on the extracellular side. Residues 240–260 (LSRSCAIVMLIAYFGSLMFQL) traverse the membrane as a helical segment. Topologically, residues 261–287 (KTHRQIFELEEDSSDSSSSEDDATDKS) are cytoplasmic. The chain crosses the membrane as a helical span at residues 288–308 (VIGFASAMVWLIGMAVVTAML). At 309–331 (SSYVVTTIEEASESMGIPVRFIS) the chain is on the extracellular side. Residues 332–352 (IILLPIVGNAAEHAGAIIFAF) traverse the membrane as a helical segment. A cation selection region spans residues 339–374 (GNAAEHAGAIIFAFKNKIDISLGITLGSATQISMLV). Residues 353-360 (KNKIDISL) lie on the Cytoplasmic side of the membrane. The helical transmembrane segment at 361–381 (GITLGSATQISMLVVPVILIV) threads the bilayer. Residues 382–385 (SWVN) are Extracellular-facing. The chain crosses the membrane as a helical span at residues 386–406 (AIPMDLDFNLLETGSLAMAVI). The Cytoplasmic segment spans residues 407-424 (TTAFTLQDDKWHYLKGLN). A helical transmembrane segment spans residues 425-445 (LVFSYIVIAVCFFVMKALPTL). Topologically, residues 446–450 (KKEDD) are extracellular.

The protein belongs to the Ca(2+):cation antiporter (CaCA) (TC 2.A.19) family. Cation/proton exchanger (CAX) subfamily. As to expression, expressed in leaf blades.

It is found in the vacuole membrane. Functionally, vacuolar cation/proton exchanger (CAX). Translocates Ca(2+) and other metal ions into vacuoles using the proton gradient formed by H(+)-ATPase and H(+)-pyrophosphatase. The chain is Vacuolar cation/proton exchanger 1c (CAX1c) from Oryza sativa subsp. japonica (Rice).